The sequence spans 295 residues: Tissue factor (295 aa).

An N-terminal signal peptide occupies residues 1 to 32 (METPAWPRVPRPETAVARTLLLGWVFAQVAGA). The Extracellular portion of the chain corresponds to 33-251 (SGTTNTVAAY…MGQEKGEFRE (219 aa)). Short sequence motifs (WKS motif) lie at residues 46 to 48 (WKS) and 77 to 79 (WKS). A disulfide bridge connects residues Cys-81 and Cys-89. 2 N-linked (GlcNAc...) asparagine glycosylation sites follow: Asn-156 and Asn-169. A WKS motif motif is present at residues 190–192 (WKS). A disulfide bridge links Cys-218 with Cys-241. Residues 252–274 (IFYIIGAVVFVVIILVIILAISL) traverse the membrane as a helical segment. Topologically, residues 275–295 (HKCRKAGVGQSWKENSPLNVS) are cytoplasmic. Residue Cys-277 is the site of S-palmitoyl cysteine attachment.

It belongs to the tissue factor family. As to quaternary structure, interacts with HSPE; the interaction, inhibited by heparin, promotes the generation of activated factor X and activates coagulation in the presence of activated factor VII. As to expression, lung, placenta and pancreas.

It localises to the membrane. The protein resides in the secreted. Functionally, initiates blood coagulation by forming a complex with circulating factor VII or VIIa. The [TF:VIIa] complex activates factors IX or X by specific limited proteolysis. TF plays a role in normal hemostasis by initiating the cell-surface assembly and propagation of the coagulation protease cascade. The chain is Tissue factor (F3) from Homo sapiens (Human).